A 104-amino-acid chain; its full sequence is Succinate dehydrogenase assembly factor 4, mitochondrial (104 aa).

A mitochondrion-targeting transit peptide spans 1–30; it reads MVSTTLSVSRMTFVWRAARPSLLNHSLRKM. The disordered stretch occupies residues 29–104; the sequence is KMSYQEGKPE…WERKGRCIDF (76 aa). Composition is skewed to basic and acidic residues over residues 63–83 and 91–104; these read EREPLQKFPDDVNPVTKEKGG and RYGDWERKGRCIDF.

This sequence belongs to the SDHAF4 family. As to quaternary structure, interacts with Sdha in its FAD-bound form.

Its subcellular location is the mitochondrion matrix. In terms of biological role, plays an essential role in the assembly of succinate dehydrogenase (SDH), an enzyme complex (also referred to as respiratory complex II) that is a component of both the tricarboxylic acid (TCA) cycle and the mitochondrial electron transport chain, and which couples the oxidation of succinate to fumarate with the reduction of ubiquinone (coenzyme Q) to ubiquinol. Binds to the flavoprotein subunit Sdha in its FAD-bound form, blocking the generation of excess reactive oxygen species (ROS) and facilitating its assembly with the iron-sulfur protein subunit Sdhb into the SDH catalytic dimer. The protein is Succinate dehydrogenase assembly factor 4, mitochondrial of Mus musculus (Mouse).